The sequence spans 157 residues: MAKKPDTASRIADNKKAAYNYFFEERFEAGLVLEGWEVKSLREGKVQITDGYVVIRNGELFVIGLQINPLGTASTHISPDKQRTKKLLMHKEEIKRLIGKVEQKGYTLVPLNLHWKAGKIKCEIALAKGKAEHDKRDTIKDREGKREVERAMKTNHR.

The segment at 135-157 (KRDTIKDREGKREVERAMKTNHR) is disordered.

The protein belongs to the SmpB family.

Its subcellular location is the cytoplasm. Functionally, required for rescue of stalled ribosomes mediated by trans-translation. Binds to transfer-messenger RNA (tmRNA), required for stable association of tmRNA with ribosomes. tmRNA and SmpB together mimic tRNA shape, replacing the anticodon stem-loop with SmpB. tmRNA is encoded by the ssrA gene; the 2 termini fold to resemble tRNA(Ala) and it encodes a 'tag peptide', a short internal open reading frame. During trans-translation Ala-aminoacylated tmRNA acts like a tRNA, entering the A-site of stalled ribosomes, displacing the stalled mRNA. The ribosome then switches to translate the ORF on the tmRNA; the nascent peptide is terminated with the 'tag peptide' encoded by the tmRNA and targeted for degradation. The ribosome is freed to recommence translation, which seems to be the essential function of trans-translation. This Albidiferax ferrireducens (strain ATCC BAA-621 / DSM 15236 / T118) (Rhodoferax ferrireducens) protein is SsrA-binding protein.